The chain runs to 328 residues: Gonadotropin-releasing hormone receptor (328 aa).

Residues 1–38 (MANSASPEQNQNHCSAINNSIPLMQGNLPTLTLSGKIR) lie on the Extracellular side of the membrane. A glycan (N-linked (GlcNAc...) asparagine) is linked at Asn18. A helical membrane pass occupies residues 39–58 (VTVTFFLFLLSATFNASFLL). At 59 to 77 (KLQKWTQKKEKGKKLSRMK) the chain is on the cytoplasmic side. The chain crosses the membrane as a helical span at residues 78-97 (LLLKHLTLANLLETLIVMPL). Topologically, residues 98–115 (DGMWNITVQWYAGELLCK) are extracellular. Asn102 carries N-linked (GlcNAc...) asparagine glycosylation. A disulfide bridge links Cys114 with Cys196. The helical transmembrane segment at 116–137 (VLSYLKLFSMYAPAFMMVVISL) threads the bilayer. Topologically, residues 138–164 (DRSLAITRPLALKSNSKVGQSMVGLAW) are cytoplasmic. Residues 165 to 184 (ILSSVFAGPQLYIFRMIHLA) form a helical membrane-spanning segment. Residues 185–212 (DSSGQTKVFSQCVTHCSFSQWWHQAFYN) are Extracellular-facing. A helical membrane pass occupies residues 213–232 (FFTFSCLFIIPLFIMLICNA). Over 233–281 (KIIFTLTRVLHQDPHELQLNQSKNNIPRARLKTLKMTVAFATSFTVCWT) the chain is Cytoplasmic. A helical membrane pass occupies residues 282-300 (PYYVLGIWYWFDPEMLNRL). At 301–306 (SDPVNH) the chain is on the extracellular side. Residues 307-326 (FFFLFAFLNPCFDPLIYGYF) traverse the membrane as a helical segment. Residues 327–328 (SL) lie on the Cytoplasmic side of the membrane.

It belongs to the G-protein coupled receptor 1 family. In terms of tissue distribution, pituitary, ovary, testis, breast and prostate but not in liver and spleen.

Its subcellular location is the cell membrane. In terms of biological role, receptor for gonadotropin releasing hormone (GnRH) that mediates the action of GnRH to stimulate the secretion of the gonadotropic hormones luteinizing hormone (LH) and follicle-stimulating hormone (FSH). This receptor mediates its action by association with G-proteins that activate a phosphatidylinositol-calcium second messenger system. Isoform 2 may act as an inhibitor of GnRH-R signaling. The chain is Gonadotropin-releasing hormone receptor (GNRHR) from Homo sapiens (Human).